We begin with the raw amino-acid sequence, 301 residues long: MKRIGLFLLTNLAILVVLGVVLFILQAVFGVRTLDEAGVGLDYTGLLIIAAVIGFGGSFISLAMSKFIAKRMTGARVIEKPRSEAEQWLVDTVRRFARQEGIGMPEVAIYDAPDMNAFATGARRNNSLVAVSTGLLQSMTRDEAEAVIGHEIAHISNGDMVTLTLIQGVVNTFVVFFSRIIGHFVDRVVFKTEQGHGPAYFITSIFAQIVLGILASVIVMWFSRQREYRADAGGAKLAGRDKMIAALERLKRSVDQEHLPDQLEAFGINGNRGGGMKEWFMSHPPLDDRIAALKEGRHLRG.

A run of 2 helical transmembrane segments spans residues 4 to 24 (IGLF…VLFI) and 44 to 64 (TGLL…SLAM). Zn(2+) is bound at residue H150. E151 is an active-site residue. H154 contacts Zn(2+). 2 consecutive transmembrane segments (helical) span residues 165–185 (LIQG…GHFV) and 201–221 (FITS…IVMW). A Zn(2+)-binding site is contributed by E227.

The protein belongs to the peptidase M48B family. It depends on Zn(2+) as a cofactor.

It is found in the cell inner membrane. The polypeptide is Protease HtpX (Alkalilimnicola ehrlichii (strain ATCC BAA-1101 / DSM 17681 / MLHE-1)).